The following is a 557-amino-acid chain: Membrane protein insertase YidC (557 aa).

The chain crosses the membrane as a helical span at residues 1 to 21; it reads MNWLRNSLIAAILVITYVLFI. A disordered region spans residues 52-71; the sequence is SDDAVASSATEESDVPEVSV. 5 consecutive transmembrane segments (helical) span residues 346–366, 369–389, 439–459, 470–490, and 517–537; these read TIDY…LDFI, LVGN…AVFF, FGGC…YWMI, FFLW…PLLM, and PIGF…YWVV.

This sequence belongs to the OXA1/ALB3/YidC family. Type 1 subfamily. Interacts with the Sec translocase complex via SecD. Specifically interacts with transmembrane segments of nascent integral membrane proteins during membrane integration.

It is found in the cell inner membrane. Its function is as follows. Required for the insertion and/or proper folding and/or complex formation of integral membrane proteins into the membrane. Involved in integration of membrane proteins that insert both dependently and independently of the Sec translocase complex, as well as at least some lipoproteins. Aids folding of multispanning membrane proteins. This chain is Membrane protein insertase YidC, found in Saccharophagus degradans (strain 2-40 / ATCC 43961 / DSM 17024).